A 211-amino-acid polypeptide reads, in one-letter code: Protein-L-isoaspartate O-methyltransferase (211 aa).

Residue Ser-60 is part of the active site.

This sequence belongs to the methyltransferase superfamily. L-isoaspartyl/D-aspartyl protein methyltransferase family.

Its subcellular location is the cytoplasm. The enzyme catalyses [protein]-L-isoaspartate + S-adenosyl-L-methionine = [protein]-L-isoaspartate alpha-methyl ester + S-adenosyl-L-homocysteine. Functionally, catalyzes the methyl esterification of L-isoaspartyl residues in peptides and proteins that result from spontaneous decomposition of normal L-aspartyl and L-asparaginyl residues. It plays a role in the repair and/or degradation of damaged proteins. The polypeptide is Protein-L-isoaspartate O-methyltransferase (Pseudomonas fluorescens (strain ATCC BAA-477 / NRRL B-23932 / Pf-5)).